The following is a 161-amino-acid chain: MPSMDIVSEVNEVELRNAVDNTKRELATRFDFRGKTADVEYKDHVVTLTAEDDFQCQQLVDILRMQLSKRNVDPSSMEVDEKAIHSGKTFSLKVKFKEGIETLIAKKLVKLIKDSKLKVQASIQGEKVRVTGKKRDDLQAVMALARESELGQPFQFDNFKD.

Belongs to the YajQ family.

In terms of biological role, nucleotide-binding protein. The polypeptide is Nucleotide-binding protein Shew185_3601 (Shewanella baltica (strain OS185)).